The primary structure comprises 424 residues: MAAIIDIIGREILDSRGNPTVEVDVLLEDGSLGRAAVPSGASTGAHEAVELRDGGSRYKGKGVLNAIAAVNGDIFDAIGGMDASEQIQIDRTMIALDGTSNKSNLGANAILGVSLAIAKAQAASLGQPLFRYIGGPAARVLPVPMMNIVNGGEHADNPIDIQEFMIMPVAAGSLADAVRMGSEVFHTLKAELKSAGHNTNVGDEGGFAPNLASTEEAIGFIMKAIEKAGYKPGDDIYLALDAASTEFFKNGVYNLQGEGKKLDAGGMVDYWADLVGKYPIISIEDGMAEDDWEGWKALTDRIGSKVQLVGDDLFVTNKRRLADGIAKGTANSILVKVNQIGSLTETLESVEMAHKASYTAVMSHRSGETEDATIADLAVATNCGQIKTGSLARSDRLAKYNQLIRIEEALGPSGEYAGKSVLKG.

Glutamine 162 serves as a coordination point for (2R)-2-phosphoglycerate. The active-site Proton donor is the glutamate 204. Mg(2+) contacts are provided by aspartate 241, glutamate 284, and aspartate 311. (2R)-2-phosphoglycerate is bound by residues lysine 336, arginine 365, serine 366, and lysine 387. Lysine 336 acts as the Proton acceptor in catalysis.

It belongs to the enolase family. Mg(2+) is required as a cofactor.

It is found in the cytoplasm. It localises to the secreted. Its subcellular location is the cell surface. The catalysed reaction is (2R)-2-phosphoglycerate = phosphoenolpyruvate + H2O. It participates in carbohydrate degradation; glycolysis; pyruvate from D-glyceraldehyde 3-phosphate: step 4/5. Its function is as follows. Catalyzes the reversible conversion of 2-phosphoglycerate (2-PG) into phosphoenolpyruvate (PEP). It is essential for the degradation of carbohydrates via glycolysis. This Parvibaculum lavamentivorans (strain DS-1 / DSM 13023 / NCIMB 13966) protein is Enolase.